Here is a 749-residue protein sequence, read N- to C-terminus: MEAETGSTMETGKGTNRGIRIALALFIGGTLVLGTLLFLVSQGLLSFQAKQEYCLKPECIEAAAAIMSKVNLSVDPCENFFRFACDGWISNNPIPEDMPSYGVYPWLRHNVDLKLKALLEKSVSRRRDTEAVQKAKILYSSCMNEKAIEKADAKPLLHILRHSPFRWPVLEANIGPEGVWSERKFSLLQTLATFRGQYSNSVFIRLYVSPDDKASNEHILKLDQATLSLAVREDFLDNTTEAKSYRDALYKFMVDTAVLLGANSSRAEHDMKSVLRLEIKIAEIMIPHENRTSEAMYNKMNISELSAMIPQFDWLGYIKKVIDTRLYPHLKDIGPSENVVVRVPQYFKDLFRILGAERKKTIANYLVWRMVYSRIPNLSRRFQYRWLEFSRVIQGTTTLLPQWDKCVNFIESALPYVVGKMFVNVHFQEDKKEMMEELIEGVRWAFIDMLEKENEWMDAGTKRKAQEKARAVLAKVGYPEFIMNDTYVNEDLKAIKFSESDYFGNVLQTRKYLAQSDFFWLRKAVPKTEWFTNPTTVNAFYSASTNQIRFPAGELQKPFFWGTEYPRSLSYGAIGVIVGHEFTHGFDNNGRKYDKNGNLDPWWSVESEEKFKEKTKCMINQYSNYYWKKAGLNVKGKRTLGENIADNGGLREAFRAYRKWINDRRQGVEEPLLPGITFTNNQLFFLSYAHVRCNSYRPEAAREQVQIGAHSPPQFRVNGAISNFEEFQKAFNCPRNSTMNRGADSCRLW.

The Cytoplasmic segment spans residues 1–20; the sequence is MEAETGSTMETGKGTNRGIR. Residues 21–37 form a helical; Signal-anchor for type II membrane protein membrane-spanning segment; that stretch reads IALALFIGGTLVLGTLL. The Extracellular segment spans residues 38-749; it reads FLVSQGLLSF…NRGADSCRLW (712 aa). In terms of domain architecture, Peptidase M13 spans 53-749; that stretch reads YCLKPECIEA…NRGADSCRLW (697 aa). Residues C54 and C59 are joined by a disulfide bond. N-linked (GlcNAc...) asparagine glycans are attached at residues N71, N238, N263, N290, N301, N377, and N484. 4 disulfides stabilise this stretch: C77–C733, C85–C693, C142–C406, and C617–C746. H580 is a Zn(2+) binding site. E581 is a catalytic residue. Zn(2+) contacts are provided by H584 and E642. D646 (proton donor) is an active-site residue. N-linked (GlcNAc...) asparagine glycosylation is present at N736.

Belongs to the peptidase M13 family. As to quaternary structure, interacts with MEPE; the interaction is zinc-dependent (via ASARM motif). Requires Zn(2+) as cofactor. In terms of processing, N-glycosylated. Expressed in bone, specifically in the osteoid and in osteocytes. Expressed in teeth, specifically in odontoblasts and ameloblasts. Expressed moderately by macrophages in the liver and has minimal expression in brown adipose tissue. Also expressed in suprabasal layers of the skin.

It is found in the cell membrane. Functionally, peptidase that cleaves SIBLING (small integrin-binding ligand, N-linked glycoprotein)-derived ASARM peptides, thus regulating their biological activity. Cleaves ASARM peptides between Ser and Glu or Asp residues. Regulates osteogenic cell differentiation and bone mineralization through the cleavage of the MEPE-derived ASARM peptide. Promotes dentin mineralization and renal phosphate reabsorption by cleaving DMP1- and MEPE-derived ASARM peptides. Inhibits the cleavage of MEPE by CTSB/cathepsin B thus preventing MEPE degradation. This chain is Phosphate-regulating neutral endopeptidase PHEX (Phex), found in Mus musculus (Mouse).